Reading from the N-terminus, the 353-residue chain is Photosystem II protein D1 (353 aa).

T2 is modified (N-acetylthreonine). The residue at position 2 (T2) is a Phosphothreonine. Transmembrane regions (helical) follow at residues 29 to 46 (YIGW…TATS), 118 to 133 (HFLL…EWEL), and 142 to 156 (WIAV…AATA). Position 118 (H118) interacts with chlorophyll a. A pheophytin a-binding site is contributed by Y126. [CaMn4O5] cluster contacts are provided by D170 and E189. Residues 197 to 218 (FHMLGVAGVFGGSLFSAMHGSL) form a helical membrane-spanning segment. H198 lines the chlorophyll a pocket. Residues H215 and 264-265 (SF) each bind a quinone. Fe cation is bound at residue H215. H272 contributes to the Fe cation binding site. The chain crosses the membrane as a helical span at residues 274-288 (FLAAWPVVGIWFTAL). Residues H332, E333, D342, and A344 each coordinate [CaMn4O5] cluster. Residues 345–353 (AVEAPSING) constitute a propeptide that is removed on maturation.

Belongs to the reaction center PufL/M/PsbA/D family. PSII is composed of 1 copy each of membrane proteins PsbA, PsbB, PsbC, PsbD, PsbE, PsbF, PsbH, PsbI, PsbJ, PsbK, PsbL, PsbM, PsbT, PsbX, PsbY, PsbZ, Psb30/Ycf12, at least 3 peripheral proteins of the oxygen-evolving complex and a large number of cofactors. It forms dimeric complexes. The D1/D2 heterodimer binds P680, chlorophylls that are the primary electron donor of PSII, and subsequent electron acceptors. It shares a non-heme iron and each subunit binds pheophytin, quinone, additional chlorophylls, carotenoids and lipids. D1 provides most of the ligands for the Mn4-Ca-O5 cluster of the oxygen-evolving complex (OEC). There is also a Cl(-1) ion associated with D1 and D2, which is required for oxygen evolution. The PSII complex binds additional chlorophylls, carotenoids and specific lipids. is required as a cofactor. Post-translationally, tyr-161 forms a radical intermediate that is referred to as redox-active TyrZ, YZ or Y-Z. C-terminally processed by CTPA; processing is essential to allow assembly of the oxygen-evolving complex and thus photosynthetic growth.

It localises to the plastid. It is found in the chloroplast thylakoid membrane. The catalysed reaction is 2 a plastoquinone + 4 hnu + 2 H2O = 2 a plastoquinol + O2. Functionally, photosystem II (PSII) is a light-driven water:plastoquinone oxidoreductase that uses light energy to abstract electrons from H(2)O, generating O(2) and a proton gradient subsequently used for ATP formation. It consists of a core antenna complex that captures photons, and an electron transfer chain that converts photonic excitation into a charge separation. The D1/D2 (PsbA/PsbD) reaction center heterodimer binds P680, the primary electron donor of PSII as well as several subsequent electron acceptors. This Lotus japonicus (Lotus corniculatus var. japonicus) protein is Photosystem II protein D1.